Consider the following 1124-residue polypeptide: Phytochrome type A (1124 aa).

Over residues 1–19 the composition is skewed to low complexity; that stretch reads MSTTRPSQSSNNSGRSRNS. The interval 1–21 is disordered; it reads MSTTRPSQSSNNSGRSRNSAR. The GAF domain maps to 218-401; sequence SMERLCDTMV…VFAIHVNKEI (184 aa). Cys-323 is a binding site for phytochromobilin. PAS domains follow at residues 617 to 687 and 750 to 821; these read VTSE…LQGE and DYKA…VNFG. The Histidine kinase domain maps to 901–1120; it reads YMKRQIRNPL…ILSVELAAAH (220 aa).

Belongs to the phytochrome family. As to quaternary structure, homodimer. Post-translationally, contains one covalently linked phytochromobilin chromophore.

Regulatory photoreceptor which exists in two forms that are reversibly interconvertible by light: the Pr form that absorbs maximally in the red region of the spectrum and the Pfr form that absorbs maximally in the far-red region. Photoconversion of Pr to Pfr induces an array of morphogenic responses, whereas reconversion of Pfr to Pr cancels the induction of those responses. Pfr controls the expression of a number of nuclear genes including those encoding the small subunit of ribulose-bisphosphate carboxylase, chlorophyll A/B binding protein, protochlorophyllide reductase, rRNA, etc. It also controls the expression of its own gene(s) in a negative feedback fashion. This chain is Phytochrome type A (PHYA), found in Lathyrus sativus (White vetchling).